We begin with the raw amino-acid sequence, 436 residues long: Fasciclin-like arabinogalactan protein 15 (436 aa).

An N-terminal signal peptide occupies residues 1–20; that stretch reads MDDLSKLLFFLLLTISITTA. FAS1 domains lie at 31-165 and 249-392; these read NSNS…ERLL and VKDF…DGVL. N-linked (GlcNAc...) asparagine glycans are attached at residues asparagine 68 and asparagine 271.

The protein belongs to the fasciclin-like AGP family.

Its subcellular location is the secreted. Its function is as follows. May be a cell surface adhesion protein. The sequence is that of Fasciclin-like arabinogalactan protein 15 (FLA15) from Arabidopsis thaliana (Mouse-ear cress).